Reading from the N-terminus, the 191-residue chain is MSSLKAEFVVSSGKPDTFPSDRLPEIAFLGRSNVGKSSLINALTGHKKLAFTSNTPGRTQTINFYRVDEKFYLVDLPGYGYARVPAGFAEQWKVLIEHYLEFRETLKFSCLILDTRRGWMEKDLDLKRWLDHHGRPYLVVATKTDKLNQSEQERGLRAIRQEGVEPLPFSALSGRGVREIWQAITTTLQAR.

One can recognise an EngB-type G domain in the interval 22–190 (RLPEIAFLGR…WQAITTTLQA (169 aa)). GTP-binding positions include 30–37 (GRSNVGKS), 57–61 (GRTQT), 75–78 (DLPG), 142–145 (TKTD), and 169–171 (FSA). Mg(2+) is bound by residues Ser-37 and Thr-59.

This sequence belongs to the TRAFAC class TrmE-Era-EngA-EngB-Septin-like GTPase superfamily. EngB GTPase family. It depends on Mg(2+) as a cofactor.

Necessary for normal cell division and for the maintenance of normal septation. In Solibacter usitatus (strain Ellin6076), this protein is Probable GTP-binding protein EngB.